We begin with the raw amino-acid sequence, 183 residues long: Probable chorismate pyruvate-lyase 2 (183 aa).

Substrate-binding residues include Arg76, Leu114, and Glu166.

It belongs to the UbiC family.

Its subcellular location is the cytoplasm. The enzyme catalyses chorismate = 4-hydroxybenzoate + pyruvate. It functions in the pathway cofactor biosynthesis; ubiquinone biosynthesis. Removes the pyruvyl group from chorismate, with concomitant aromatization of the ring, to provide 4-hydroxybenzoate (4HB) for the ubiquinone pathway. In Pseudomonas fluorescens (strain Pf0-1), this protein is Probable chorismate pyruvate-lyase 2.